The chain runs to 389 residues: Cell wall mannoprotein HSP150 (389 aa).

The N-terminal stretch at 1–18 (MQYKKTLVASALAATTLA) is a signal peptide. Residues 19-72 (AYAPSEPWSTLTPTATYSGGVTDYASTFGIAVQPISTTSSASSAATTASSKAKR) constitute a propeptide that is removed on maturation. 10 PIR1/2/3 repeats span residues 71 to 89 (KRAA…TTTA), 97 to 115 (AAAV…TKTT), 116 to 134 (AAAV…TKTT), 140 to 158 (AAAV…TTTL), 164 to 182 (AAAV…TKTT), 183 to 201 (AAAV…TKTT), 202 to 220 (AAAV…TKTT), 221 to 239 (AAAV…TKTT), 240 to 257 (AAAV…TTKT), and 258 to 276 (TQAA…TATS).

Belongs to the PIR protein family. Post-translationally, covalently linked to beta-1,3-glucan of the inner cell wall layer via an alkali-sensitive ester linkage between the gamma-carboxyl group of glutamic acids, arising from specific glutamines within the PIR1/2/3 repeats, and hydroxyl groups of glucoses of beta-1,3-glucan chains. The propeptide is cleaved off in the late Golgi. While both peptides are secreted, only a fraction of the mature glycoprotein is incorporated into the cell wall. In terms of processing, O-glycosylated. Extensively O-mannosylated.

It localises to the secreted. The protein resides in the cell wall. Its function is as follows. Component of the outer cell wall layer. Required for stability of the cell wall and for optimal growth. Required for resistance against several antifungal and cell wall-perturbing agents and for tolerance to heat shock. In Saccharomyces cerevisiae (strain YJM789) (Baker's yeast), this protein is Cell wall mannoprotein HSP150 (HSP150).